We begin with the raw amino-acid sequence, 120 residues long: Large ribosomal subunit protein bL19 (120 aa).

This sequence belongs to the bacterial ribosomal protein bL19 family.

In terms of biological role, this protein is located at the 30S-50S ribosomal subunit interface and may play a role in the structure and function of the aminoacyl-tRNA binding site. The sequence is that of Large ribosomal subunit protein bL19 from Acaryochloris marina (strain MBIC 11017).